The primary structure comprises 449 residues: tRNA (guanine(37)-N(1))-methyltransferase (449 aa).

S-adenosyl-L-methionine-binding positions include histidine 216, 254 to 255, 282 to 283, and asparagine 345; these read DL and DG.

Belongs to the class I-like SAM-binding methyltransferase superfamily. TRM5/TYW2 family. Monomer.

The protein resides in the mitochondrion matrix. It is found in the nucleus. It localises to the cytoplasm. It catalyses the reaction guanosine(37) in tRNA + S-adenosyl-L-methionine = N(1)-methylguanosine(37) in tRNA + S-adenosyl-L-homocysteine + H(+). In terms of biological role, specifically methylates the N1 position of guanosine-37 in various cytoplasmic and mitochondrial tRNAs. Methylation is not dependent on the nature of the nucleoside 5' of the target nucleoside. This is the first step in the biosynthesis of wybutosine (yW), a modified base adjacent to the anticodon of tRNAs and required for accurate decoding. The polypeptide is tRNA (guanine(37)-N(1))-methyltransferase (Candida albicans (strain WO-1) (Yeast)).